An 87-amino-acid polypeptide reads, in one-letter code: Large ribosomal subunit protein bL27 (87 aa).

Residues 1-24 (MAHKKGTGSTRNGRDSRSQRLGVK) form a disordered region.

Belongs to the bacterial ribosomal protein bL27 family.

The sequence is that of Large ribosomal subunit protein bL27 from Crocosphaera subtropica (strain ATCC 51142 / BH68) (Cyanothece sp. (strain ATCC 51142)).